The sequence spans 418 residues: Glutamyl-tRNA reductase (418 aa).

Substrate contacts are provided by residues 49 to 52, S107, 112 to 114, and Q118; these read TCNR and EPQ. Catalysis depends on C50, which acts as the Nucleophile. 187 to 192 serves as a coordination point for NADP(+); it reads GAGETI.

This sequence belongs to the glutamyl-tRNA reductase family. In terms of assembly, homodimer.

The catalysed reaction is (S)-4-amino-5-oxopentanoate + tRNA(Glu) + NADP(+) = L-glutamyl-tRNA(Glu) + NADPH + H(+). The protein operates within porphyrin-containing compound metabolism; protoporphyrin-IX biosynthesis; 5-aminolevulinate from L-glutamyl-tRNA(Glu): step 1/2. In terms of biological role, catalyzes the NADPH-dependent reduction of glutamyl-tRNA(Glu) to glutamate 1-semialdehyde (GSA). The sequence is that of Glutamyl-tRNA reductase from Pseudoalteromonas translucida (strain TAC 125).